The sequence spans 254 residues: Pyridoxine 5'-phosphate synthase (254 aa).

Asparagine 12 lines the 3-amino-2-oxopropyl phosphate pocket. Position 14-15 (14-15 (DH)) interacts with 1-deoxy-D-xylulose 5-phosphate. Position 23 (arginine 23) interacts with 3-amino-2-oxopropyl phosphate. Residue histidine 48 is the Proton acceptor of the active site. Arginine 50 and histidine 55 together coordinate 1-deoxy-D-xylulose 5-phosphate. Catalysis depends on glutamate 75, which acts as the Proton acceptor. 1-deoxy-D-xylulose 5-phosphate is bound at residue threonine 105. The active-site Proton donor is the histidine 199. Residues glycine 200 and 221–222 (GF) each bind 3-amino-2-oxopropyl phosphate.

The protein belongs to the PNP synthase family. As to quaternary structure, homooctamer; tetramer of dimers.

Its subcellular location is the cytoplasm. The enzyme catalyses 3-amino-2-oxopropyl phosphate + 1-deoxy-D-xylulose 5-phosphate = pyridoxine 5'-phosphate + phosphate + 2 H2O + H(+). The protein operates within cofactor biosynthesis; pyridoxine 5'-phosphate biosynthesis; pyridoxine 5'-phosphate from D-erythrose 4-phosphate: step 5/5. Catalyzes the complicated ring closure reaction between the two acyclic compounds 1-deoxy-D-xylulose-5-phosphate (DXP) and 3-amino-2-oxopropyl phosphate (1-amino-acetone-3-phosphate or AAP) to form pyridoxine 5'-phosphate (PNP) and inorganic phosphate. The protein is Pyridoxine 5'-phosphate synthase of Rhodopseudomonas palustris (strain HaA2).